The chain runs to 95 residues: Small ribosomal subunit protein uS19 (95 aa).

Residues Glu73 to Lys95 form a disordered region.

It belongs to the universal ribosomal protein uS19 family.

Its function is as follows. Protein S19 forms a complex with S13 that binds strongly to the 16S ribosomal RNA. The chain is Small ribosomal subunit protein uS19 from Deinococcus deserti (strain DSM 17065 / CIP 109153 / LMG 22923 / VCD115).